The primary structure comprises 420 residues: WD repeat-containing protein 21 (420 aa).

A DDB-boX motif is present at residues 73–75; sequence RQF. 3 WD repeats span residues 251 to 289, 293 to 332, and 341 to 383; these read QSKGDVFSLKYLGDNLVIAGCRNKSVLVYDLRTKKECVQ, HGSSICSMQNLDFSQPKLLVSGLESKISLYDCRFLQSKKR, and GHSN…PFKE.

The protein localises to the cytoplasm. It localises to the nucleus. This chain is WD repeat-containing protein 21 (wdr21), found in Schizosaccharomyces pombe (strain 972 / ATCC 24843) (Fission yeast).